Reading from the N-terminus, the 406-residue chain is Tryptophan synthase beta chain (406 aa).

Position 99 is an N6-(pyridoxal phosphate)lysine (Lys99).

The protein belongs to the TrpB family. Tetramer of two alpha and two beta chains. The cofactor is pyridoxal 5'-phosphate.

The catalysed reaction is (1S,2R)-1-C-(indol-3-yl)glycerol 3-phosphate + L-serine = D-glyceraldehyde 3-phosphate + L-tryptophan + H2O. It participates in amino-acid biosynthesis; L-tryptophan biosynthesis; L-tryptophan from chorismate: step 5/5. In terms of biological role, the beta subunit is responsible for the synthesis of L-tryptophan from indole and L-serine. The polypeptide is Tryptophan synthase beta chain (Brucella melitensis biotype 2 (strain ATCC 23457)).